A 242-amino-acid chain; its full sequence is Octanoyltransferase (242 aa).

Residues 31 to 206 (SQTTDEIWFL…LFLKNFGYNQ (176 aa)) form the BPL/LPL catalytic domain. Residues 70-77 (RGGQVTYH), 137-139 (SIG), and 150-152 (GLA) each bind substrate. Cys-168 functions as the Acyl-thioester intermediate in the catalytic mechanism.

Belongs to the LipB family.

The protein resides in the cytoplasm. The catalysed reaction is octanoyl-[ACP] + L-lysyl-[protein] = N(6)-octanoyl-L-lysyl-[protein] + holo-[ACP] + H(+). It functions in the pathway protein modification; protein lipoylation via endogenous pathway; protein N(6)-(lipoyl)lysine from octanoyl-[acyl-carrier-protein]: step 1/2. In terms of biological role, catalyzes the transfer of endogenously produced octanoic acid from octanoyl-acyl-carrier-protein onto the lipoyl domains of lipoate-dependent enzymes. Lipoyl-ACP can also act as a substrate although octanoyl-ACP is likely to be the physiological substrate. In Coxiella burnetii (strain CbuK_Q154) (Coxiella burnetii (strain Q154)), this protein is Octanoyltransferase.